The following is a 299-amino-acid chain: Tetrahydromethanopterin S-methyltransferase subunit E (299 aa).

Helical transmembrane passes span 57–79, 89–111, 132–154, 164–183, 227–246, and 261–283; these read AISG…AWAL, AIIV…AFLG, HIGP…AYLA, LPLV…SSTG, FCSR…IIFL, and LVTK…AVIN.

This sequence belongs to the MtrE family. As to quaternary structure, the complex is composed of 8 subunits; MtrA, MtrB, MtrC, MtrD, MtrE, MtrF, MtrG and MtrH.

Its subcellular location is the cell membrane. The enzyme catalyses 5-methyl-5,6,7,8-tetrahydromethanopterin + coenzyme M + 2 Na(+)(in) = 5,6,7,8-tetrahydromethanopterin + methyl-coenzyme M + 2 Na(+)(out). It participates in one-carbon metabolism; methanogenesis from CO(2); methyl-coenzyme M from 5,10-methylene-5,6,7,8-tetrahydromethanopterin: step 2/2. Functionally, part of a complex that catalyzes the formation of methyl-coenzyme M and tetrahydromethanopterin from coenzyme M and methyl-tetrahydromethanopterin. This is an energy-conserving, sodium-ion translocating step. The protein is Tetrahydromethanopterin S-methyltransferase subunit E of Methanococcus maripaludis (strain DSM 14266 / JCM 13030 / NBRC 101832 / S2 / LL).